The chain runs to 805 residues: MVFSHRNVEKKWQQYWEQNKTFKTSEDEGKKKFYALDMFPYPSGAGLHVGHPEGYTATDILSRMKRMQGYNVLHPMGWDAFGLPAEQYALDTGNDPAEFTEHNINTFRRQIKSLGFSYDWDREINTTDPHYYKWTQWIFTKLYEHGLAYIDEVAVNWCPALGTVLANEEVIDGKSERGGHPVERRPMKQWVLKITAYAERLLADLDELDWPESIKEMQRNWIGRSEGAEVTFGIEGHDESFTVFTTRPDTLYGATYAVLAPEHKLVEQITVPAQKEAVEAYLDQAKRKSDLERTDLAKEKTGVFTGAYAINPVNGERLPIWIADYVLISYGTGSIMAVPAHDERDYEFAKTFDLPIKQVIAGGDISKEAYAGDGEHINSGMLDGLNKEQAISKMIEWLEAEGKGNRKVTYRLRDWLFSRQRYWGEPIPILHLEDGTMKVVPESELPIMLPKTKEIKPSGTGESPLANIAEWVNTIDPETGMKARRETNTMPQWAGSCWYFLRFIDPHNDKALADPDKLKEWLPIDIYIGGAEHAVLHLLYSRFWHKFLYDIGVVPTKEPFQKLFNQGMILGENNEKMSKSKGNVVNPDDIIDSHGADTLRMYEMFMGPLDASIAWSTKGLDGARRFLDRVYRLFVGDNGELNEKIVETSNVAGMERVYHQTVKKVTEDYEGLRFNTGISQLMVFVNEAYKAEVLPKKFMEDFVKMLSPIAPHLGEELWEKLGHSESVAYAAWPTYDEAKLVEDEVEIVLQINGKNKEKLLIASDSTKEQMEEMAKNNEMINELIEGKTIVKVIAVPGKLVNIVVR.

Residues 40–51 (PYPSGAGLHVGH) carry the 'HIGH' region motif. The 'KMSKS' region motif lies at 576 to 580 (KMSKS). Position 579 (Lys-579) interacts with ATP.

It belongs to the class-I aminoacyl-tRNA synthetase family.

It is found in the cytoplasm. The catalysed reaction is tRNA(Leu) + L-leucine + ATP = L-leucyl-tRNA(Leu) + AMP + diphosphate. The sequence is that of Leucine--tRNA ligase from Brevibacillus brevis (strain 47 / JCM 6285 / NBRC 100599).